We begin with the raw amino-acid sequence, 132 residues long: Small ribosomal subunit protein uS8 (132 aa).

The protein belongs to the universal ribosomal protein uS8 family. As to quaternary structure, part of the 30S ribosomal subunit. Contacts proteins S5 and S12.

One of the primary rRNA binding proteins, it binds directly to 16S rRNA central domain where it helps coordinate assembly of the platform of the 30S subunit. This chain is Small ribosomal subunit protein uS8, found in Francisella tularensis subsp. novicida (strain U112).